Consider the following 502-residue polypeptide: MQHDGSFNPEARFDAVLVGAGIMSATLAALLHELDTQLRILLVERLEAPALESSAAVNNAGTGHAANCELNYTPIQADGTVATAKAVAINTSFERSLEFWSSLQERGDLDTSSFLHQAAHISAVWTPENIAFLRQRFSQLKELPAFARMRWSEDQSELTEWMPLVMAGRDLKQPVAATRIDRGTDVDFGSLTRAYLMPLQQSGALSVEYGTQVHDLKRLRHSDMTEADWRVVLKGPSGKKEVRAPFVFLGAGGGALPLLQRSGIPEAADFAGFPVSGLWLVCGDAQLADRQRAKVYGKAAVGAPPMSVPHLDTRWVDGKRSLLFGPFAGFSSKFLKQGSLLDLPASVRATNLLPMLQVGATNFELVQYLINQLRQSPTQRHEALQQFMPTARAEDWTLSVAGQRVQIIKRSKQGGRLQLGTEVVASGDGSLAALLGASPGASTAVTIMLEVLERCFKQRLDSDAWQQRLQALLPSIHEDPHQDPQVLNRMRERSDALLGLTA.

It belongs to the MQO family. FAD serves as cofactor.

It carries out the reaction (S)-malate + a quinone = a quinol + oxaloacetate. The protein operates within carbohydrate metabolism; tricarboxylic acid cycle; oxaloacetate from (S)-malate (quinone route): step 1/1. The chain is Probable malate:quinone oxidoreductase from Synechococcus sp. (strain CC9605).